A 919-amino-acid chain; its full sequence is Glutamate receptor ionotropic, kainate 3 (919 aa).

The first 31 residues, 1-31 (MTAPWRRLRSLVWEYWAGLLVCAFWIPDSRG), serve as a signal peptide directing secretion. Topologically, residues 32-563 (MPHVIRIGGI…VFSFLNPLSP (532 aa)) are extracellular. Residues Asn-70, Asn-76, Asn-278, Asn-381, Asn-415, Asn-426, and Asn-433 are each glycosylated (N-linked (GlcNAc...) asparagine). Cysteines 99 and 350 form a disulfide. L-glutamate-binding residues include Pro-518, Thr-520, and Arg-525. N-linked (GlcNAc...) asparagine glycans are attached at residues Asn-548 and Asn-551. The chain crosses the membrane as a helical span at residues 564–584 (DIWMYVLLAYLGVSCVLFVIA). Residues 585-636 (RFSPYEWYDAHPCNPGSEVVENNFTLLNSFWFGMGSLMQQGSELMPKALSTR) lie on the Cytoplasmic side of the membrane. Residues 637–657 (IIGGIWWFFTLIIISSYTANL) form a helical membrane-spanning segment. The Extracellular portion of the chain corresponds to 658 to 820 (AAFLTVERME…KEASALGIQK (163 aa)). L-glutamate contacts are provided by Ala-691, Thr-692, and Glu-739. Asn-752 is a glycosylation site (N-linked (GlcNAc...) asparagine). A helical membrane pass occupies residues 821–841 (IGGIFIVLAAGLVLSVLVAVG). Over 842–919 (EFVYKLRKTA…CSTSLAPVFP (78 aa)) the chain is Cytoplasmic. Residue Ser-869 is modified to Phosphoserine. Lys-887 participates in a covalent cross-link: Glycyl lysine isopeptide (Lys-Gly) (interchain with G-Cter in SUMO1).

It belongs to the glutamate-gated ion channel (TC 1.A.10.1) family. GRIK3 subfamily. As to quaternary structure, homotetramer, and heterotetramer with either GRIK4 or GRIK5. Can form functional heteromeric receptors with GRIK2. Interacts with PRKCABP. Interacts with NETO2.

It localises to the cell membrane. Its subcellular location is the postsynaptic cell membrane. It catalyses the reaction Ca(2+)(in) = Ca(2+)(out). In terms of biological role, ionotropic glutamate receptor that functions as a cation-permeable ligand-gated ion channel, gated by L-glutamate and the glutamatergic agonist kainic acid. Binding of the excitatory neurotransmitter L-glutamate induces a conformation change, leading to the opening of the cation channel, and thereby converts the chemical signal to an electrical impulse. The receptor then desensitizes rapidly and enters a transient inactive state, characterized by the presence of bound agonist. In association with GRIK2, involved in presynaptic facilitation of glutamate release at hippocampal mossy fiber synapses. The polypeptide is Glutamate receptor ionotropic, kainate 3 (GRIK3) (Macaca fascicularis (Crab-eating macaque)).